Here is a 494-residue protein sequence, read N- to C-terminus: MGSTSSLYAAIDLGSNSFHMLVVREVAGSIQTLTRIKRKVRLAAGLNSENALSNEAMERGWQCLRLFAERLQDIPPSQIRVVATATLRLAVNAGDFIAKAQEILGCPVQVISGEEEARLIYQGVAHTTGGADQRLVVDIGGASTELVTGTGAQTTSLFSLSMGCVTWLERYFADRNLGQENFDAAEKAAREVLRPVADELRYHGWKVCVGASGTVQALQEIMMAQGMDERITLEKLQQLKQRAIHCGRLEELEIDGLTLERALVFPSGLAILIAIFTELNIQCMTLAGGALREGLVYGMLHLTVEQDIRSRTLRNIQRRFMIDIDQAQRVAKVAANFYDQVENEWHLEAISRDLLISACQLHEIGLSVDFKQAPQHAAYLVRNLDLPGFTPAQKKLLATLLLNQTNPVDLSSLHQQNAVPPRVAEQLCRLLRLAIIFASRRRDDLVPEMTLQANHELLTLTLPQGWLTQHPLGKEIIDQESQWQSYVHWPLEVH.

Belongs to the GppA/Ppx family. GppA subfamily.

It carries out the reaction guanosine 3'-diphosphate 5'-triphosphate + H2O = guanosine 3',5'-bis(diphosphate) + phosphate + H(+). It functions in the pathway purine metabolism; ppGpp biosynthesis; ppGpp from GTP: step 2/2. Catalyzes the conversion of pppGpp to ppGpp. Guanosine pentaphosphate (pppGpp) is a cytoplasmic signaling molecule which together with ppGpp controls the 'stringent response', an adaptive process that allows bacteria to respond to amino acid starvation, resulting in the coordinated regulation of numerous cellular activities. The chain is Guanosine-5'-triphosphate,3'-diphosphate pyrophosphatase from Escherichia coli O6:H1 (strain CFT073 / ATCC 700928 / UPEC).